A 256-amino-acid polypeptide reads, in one-letter code: 1-(5-phosphoribosyl)-5-[(5-phosphoribosylamino)methylideneamino] imidazole-4-carboxamide isomerase (256 aa).

Asp8 functions as the Proton acceptor in the catalytic mechanism. Catalysis depends on Asp130, which acts as the Proton donor.

The protein belongs to the HisA/HisF family.

The protein resides in the cytoplasm. It carries out the reaction 1-(5-phospho-beta-D-ribosyl)-5-[(5-phospho-beta-D-ribosylamino)methylideneamino]imidazole-4-carboxamide = 5-[(5-phospho-1-deoxy-D-ribulos-1-ylimino)methylamino]-1-(5-phospho-beta-D-ribosyl)imidazole-4-carboxamide. It participates in amino-acid biosynthesis; L-histidine biosynthesis; L-histidine from 5-phospho-alpha-D-ribose 1-diphosphate: step 4/9. This chain is 1-(5-phosphoribosyl)-5-[(5-phosphoribosylamino)methylideneamino] imidazole-4-carboxamide isomerase, found in Chlorobium luteolum (strain DSM 273 / BCRC 81028 / 2530) (Pelodictyon luteolum).